Reading from the N-terminus, the 729-residue chain is Fibroblast growth factor receptor 2 (729 aa).

The N-terminal stretch at 1–21 (MFSWSYLMGLVMVATATLSLA) is a signal peptide. Residues 22 to 285 (RPSYNIAEDT…ELDSSSEYTE (264 aa)) lie on the Extracellular side of the membrane. A disordered region spans residues 29-62 (EDTTLEPEDANSSGDDEDDNDGSEDFTNDNNHMR). The span at 31–55 (TTLEPEDANSSGDDEDDNDGSEDFT) shows a compositional bias: acidic residues. Residue Asn-39 is glycosylated (N-linked (GlcNAc...) asparagine). Ig-like C2-type domains follow at residues 64-157 (PYWT…YHLD) and 166-268 (PILQ…AWLT). Residues 71-88 (KLEKKLHAVPAANTVKFR) form a heparin-binding region. A disulfide bond links Cys-89 and Cys-141. N-linked (GlcNAc...) asparagine glycans are attached at residues Asn-138, Asn-151, Asn-175, Asn-207, Asn-228, Asn-241, and Asn-256. A disulfide bridge links Cys-188 with Cys-252. Residues 286–306 (IAIYCVGGFLITCMIGTIMVC) traverse the membrane as a helical segment. The Cytoplasmic portion of the chain corresponds to 307 to 729 (HMKGRGKKSD…SQHTNGTIKT (423 aa)). At Tyr-374 the chain carries Phosphotyrosine; by autocatalysis. The Protein kinase domain occupies 389–678 (LTLGKPLGEG…LTQTTNEEYL (290 aa)). Residues 395–403 (LGEGCFGQV), Lys-425, 473–475 (EYA), and Asn-479 each bind ATP. Tyr-494 carries the phosphotyrosine; by autocatalysis modification. Catalysis depends on Asp-534, which acts as the Proton acceptor. Residues Tyr-564, Tyr-565, and Tyr-677 each carry the phosphotyrosine; by autocatalysis modification. The segment at 683-729 (PLEQYSPSYPDTRSSCSSGDDSVFSPDAMPYDPCLPKSQHTNGTIKT) is disordered. Positions 693-707 (DTRSSCSSGDDSVFS) are enriched in low complexity. The span at 720 to 729 (SQHTNGTIKT) shows a compositional bias: polar residues.

It belongs to the protein kinase superfamily. Tyr protein kinase family. Fibroblast growth factor receptor subfamily. As to quaternary structure, monomer. Homodimer after ligand binding. In terms of processing, autophosphorylated. Binding of FGF family members together with heparan sulfate proteoglycan or heparin promotes receptor dimerization and autophosphorylation on tyrosine residues. Autophosphorylation occurs in trans between the two FGFR molecules present in the dimer. Post-translationally, N-glycosylated in the endoplasmic reticulum. The N-glycan chains undergo further maturation to an Endo H-resistant form in the Golgi apparatus. Ubiquitinated. FGFR2 is rapidly ubiquitinated after autophosphorylation, leading to internalization and degradation. Subject to degradation both in lysosomes and by the proteasome.

Its subcellular location is the cell membrane. The protein resides in the golgi apparatus. The protein localises to the cytoplasmic vesicle. The enzyme catalyses L-tyrosyl-[protein] + ATP = O-phospho-L-tyrosyl-[protein] + ADP + H(+). Its activity is regulated as follows. Present in an inactive conformation in the absence of bound ligand. Ligand binding leads to dimerization and activation by autophosphorylation on tyrosine residues. Functionally, tyrosine-protein kinase that acts as a cell-surface receptor for fibroblast growth factors and plays an essential role in the regulation of cell proliferation, differentiation, migration and apoptosis, and in the regulation of embryonic development. Required for normal embryonic patterning, limb bud development, lung morphogenesis, osteogenesis and skin development. Plays an essential role in the regulation of osteoblast differentiation, proliferation and apoptosis, and is required for normal skeleton development. Promotes cell proliferation in keratinocytes and immature osteoblasts, but promotes apoptosis in differentiated osteoblasts. Phosphorylates PLCG1, FRS2 and PAK4. Ligand binding leads to the activation of several signaling cascades. Activation of PLCG1 leads to the production of the cellular signaling molecules diacylglycerol and inositol 1,4,5-trisphosphate. Phosphorylation of FRS2 triggers recruitment of GRB2, GAB1, PIK3R1 and SOS1, and mediates activation of RAS, MAPK1/ERK2, MAPK3/ERK1 and the MAP kinase signaling pathway, as well as of the AKT1 signaling pathway. FGFR2 signaling is down-regulated by ubiquitination, internalization and degradation. Mutations that lead to constitutive kinase activation or impair normal FGFR2 maturation, internalization and degradation lead to aberrant signaling. Over-expressed FGFR2 promotes activation of STAT1. This is Fibroblast growth factor receptor 2 (FGFR2) from Notophthalmus viridescens (Eastern newt).